A 506-amino-acid polypeptide reads, in one-letter code: MRIWFWLAILVFRWWNALWVKTFFQPDEFYQSLEVAHHFIFRYGFLTWEWTSAIRSALHPLIFAALYRVLQVLKLDSSYFVFTNAPKLLQGTFAAILDYGTYKFALVRYGSKTANWTLACSLVSIMNAYVGVRTFSNSLETTLTSIGFYYFSYYLKYENSSPEQRKKAYSSLLGFISVAAFACFIRPTNILVWIFPLLFWNKNPQTPIKDLLSFSNVFNRFRFLYALGYGRLFGIFVLCVSLFLVNIIADRILYGRFVFPIISFFQFNVTSGLSSLYGLNAWHYYLSQALPLICGGFLPFVLLTMDLQTAGTILCVFFPYSLIGHKELRFVYPISPILLTLAGKFFSSFSSWKRAARFFFLIGLGHALVITFLCRFHQFGVMEVMPLIHSLAEKNQTGLILAPCHTTPWQSHIHSPFAENGWKFLTCEPFEKPFDETDRFYENMPTFLDKIKEWPDYLIFFEERFYSLYSYLDSRGLKYEEVQRYYNSLIPESRERAGALLVYKKL.

The N-linked (GlcNAc...) asparagine glycan is linked to Asn-115. The next 6 membrane-spanning stretches (helical) occupy residues 180–200 (AFACFIRPTNILVWIFPLLFW), 229–249 (YGRLFGIFVLCVSLFLVNIIA), 257–277 (FVFPIISFFQFNVTSGLSSLY), 285–305 (YLSQALPLICGGFLPFVLLTM), 330–350 (FVYPISPILLTLAGKFFSSFS), and 358–378 (FFFLIGLGHALVITFLCRFHQ). N-linked (GlcNAc...) asparagine glycosylation is present at Asn-395.

This sequence belongs to the glycosyltransferase 22 family. PIGB subfamily.

It localises to the endoplasmic reticulum membrane. It participates in glycolipid biosynthesis; glycosylphosphatidylinositol-anchor biosynthesis. Functionally, mannosyltransferase involved in glycosylphosphatidylinositol-anchor biosynthesis. Transfers the third mannose to Man2-GlcN-acyl-PI during GPI precursor assembly. In Schizosaccharomyces pombe (strain 972 / ATCC 24843) (Fission yeast), this protein is GPI mannosyltransferase 3 (gpi10).